Consider the following 277-residue polypeptide: Formamidopyrimidine-DNA glycosylase (277 aa).

The active-site Schiff-base intermediate with DNA is the proline 2. Glutamate 3 acts as the Proton donor in catalysis. Lysine 58 serves as the catalytic Proton donor; for beta-elimination activity. DNA-binding residues include histidine 95, arginine 113, and arginine 158. The FPG-type zinc finger occupies 243–277 (GVYDRANQPCLRCGGVVRQIRQAGRSTYYCTGCQH). Arginine 267 acts as the Proton donor; for delta-elimination activity in catalysis.

Belongs to the FPG family. In terms of assembly, monomer. The cofactor is Zn(2+).

It catalyses the reaction Hydrolysis of DNA containing ring-opened 7-methylguanine residues, releasing 2,6-diamino-4-hydroxy-5-(N-methyl)formamidopyrimidine.. The enzyme catalyses 2'-deoxyribonucleotide-(2'-deoxyribose 5'-phosphate)-2'-deoxyribonucleotide-DNA = a 3'-end 2'-deoxyribonucleotide-(2,3-dehydro-2,3-deoxyribose 5'-phosphate)-DNA + a 5'-end 5'-phospho-2'-deoxyribonucleoside-DNA + H(+). In terms of biological role, involved in base excision repair of DNA damaged by oxidation or by mutagenic agents. Acts as a DNA glycosylase that recognizes and removes damaged bases. Has a preference for oxidized purines, such as 7,8-dihydro-8-oxoguanine (8-oxoG). Has AP (apurinic/apyrimidinic) lyase activity and introduces nicks in the DNA strand. Cleaves the DNA backbone by beta-delta elimination to generate a single-strand break at the site of the removed base with both 3'- and 5'-phosphates. The polypeptide is Formamidopyrimidine-DNA glycosylase (Dechloromonas aromatica (strain RCB)).